A 293-amino-acid chain; its full sequence is Homoserine kinase (293 aa).

84-94 (PLSRGLGSSSA) contributes to the ATP binding site.

It belongs to the GHMP kinase family. Homoserine kinase subfamily.

The protein localises to the cytoplasm. It catalyses the reaction L-homoserine + ATP = O-phospho-L-homoserine + ADP + H(+). Its pathway is amino-acid biosynthesis; L-threonine biosynthesis; L-threonine from L-aspartate: step 4/5. Functionally, catalyzes the ATP-dependent phosphorylation of L-homoserine to L-homoserine phosphate. In Aliarcobacter butzleri (strain RM4018) (Arcobacter butzleri), this protein is Homoserine kinase.